The chain runs to 119 residues: Large ribosomal subunit protein bL20 (119 aa).

It belongs to the bacterial ribosomal protein bL20 family.

In terms of biological role, binds directly to 23S ribosomal RNA and is necessary for the in vitro assembly process of the 50S ribosomal subunit. It is not involved in the protein synthesizing functions of that subunit. This chain is Large ribosomal subunit protein bL20, found in Bordetella petrii (strain ATCC BAA-461 / DSM 12804 / CCUG 43448).